A 94-amino-acid chain; its full sequence is Small nuclear ribonucleoprotein E (94 aa).

Residues isoleucine 14–aspartate 94 enclose the Sm domain.

The protein belongs to the snRNP Sm proteins family. Component of the Sm core complex, present in spliceosomal snRNP U1, U2, U4/U6 and U5. The core complex contains SMB1, SMD1, SMD2, SMD3, SME1, SMX3 and SMX2 (Sm proteins B, D1, D2, D3, E, F and G, respectively), and is probably a heptameric ring structure. SME1 specifically interacts with SMX2 and SMX3. Component of the U4/U6-U5 tri-snRNP complex composed of the U4, U6 and U5 snRNAs and at least PRP3, PRP4, PRP6, PRP8, PRP18, PRP31, PRP38, SNU13, SNU23, SNU66, SNU114, SPP381, SMB1, SMD1, SMD2, SMD3, SMX2, SMX3, LSM2, LSM3, LSM4, LSM5, LSM6, LSM7, LSM8, BRR2 and DIB1.

Its subcellular location is the cytoplasm. It is found in the nucleus. Functionally, involved in pre-mRNA splicing. Binds and is required for the stability of snRNA U1, U2, U4 and U5 which contain a highly conserved structural motif called the Sm binding site. Involved in cap modification. The chain is Small nuclear ribonucleoprotein E (SME1) from Saccharomyces cerevisiae (strain ATCC 204508 / S288c) (Baker's yeast).